The primary structure comprises 440 residues: 5-hydroxytryptamine receptor 6 (440 aa).

The Extracellular segment spans residues 1-27 (MVPEPGPVNSSTPAWGPGPPPAPGGSG). N-linked (GlcNAc...) asparagine glycosylation is present at asparagine 9. Residues 28 to 52 (WVAAALCVVIVLTAAANSLLIALIC) traverse the membrane as a helical segment. The Cytoplasmic segment spans residues 53–62 (TQPALRNTSN). A helical transmembrane segment spans residues 63-88 (FFLVSLFTSDLMVGLVVMPPAMLNAL). The Extracellular segment spans residues 89 to 96 (YGRWVLAR). A helical membrane pass occupies residues 97 to 122 (GLCLLWTAFDVMCCSASILNLCLISL). A disulfide bridge connects residues cysteine 99 and cysteine 180. Aspartate 106 is a serotonin binding site. Topologically, residues 123–142 (DRYLLILSPLRYKLRMTAPR) are cytoplasmic. The helical transmembrane segment at 143 to 167 (ALALILGAWSLAALASFLPLLLGWH) threads the bilayer. The Extracellular portion of the chain corresponds to 168–185 (ELGKARTSAPGQCRLLAS). The chain crosses the membrane as a helical span at residues 186 to 209 (LPYVLVASGVTFFLPSGAICFTYC). Topologically, residues 210–268 (RILLAARKQAVQVASLTTGTATAGQALETLQVPRTPRPGMESADSRRLTTKHSRKALKA) are cytoplasmic. Residues 269–295 (SLTLGILLSMFFVTWLPFFVASIAQAV) form a helical membrane-spanning segment. Topologically, residues 296–301 (CDCISP) are extracellular. Residues 302-325 (GLFDVLTWLGYCNSTMNPIIYPLF) traverse the membrane as a helical segment. Topologically, residues 326–440 (MRDFKRALGR…RQHPLGSPMN (115 aa)) are cytoplasmic.

The protein belongs to the G-protein coupled receptor 1 family. Interacts with CDK5. Interacts with MTOR. Interacts with RPTOR and NF1.

The protein resides in the cell membrane. G-protein coupled receptor for 5-hydroxytryptamine (serotonin), a biogenic hormone that functions as a neurotransmitter, a hormone and a mitogen. Also has a high affinity for tricyclic psychotropic drugs. Ligand binding causes a conformation change that triggers signaling via guanine nucleotide-binding proteins (G proteins) and modulates the activity of downstream effectors. HTR6 is coupled to G(s) G alpha proteins and mediates activation of adenylate cyclase activity. Controls pyramidal neurons migration during corticogenesis, through the regulation of CDK5 activity. Is an activator of mTOR signaling. The polypeptide is 5-hydroxytryptamine receptor 6 (Mus musculus (Mouse)).